The primary structure comprises 327 residues: GTPase Obg (327 aa).

The region spanning 2-160 (HLFKDSLNLI…LNLRLELSLI (159 aa)) is the Obg domain. Residues 161–326 (ADVGLVGLPN…LVSEFFSLAK (166 aa)) form the OBG-type G domain. GTP-binding positions include 167–174 (GLPNAGKS), 192–196 (FTTKI), 213–216 (DLPG), 280–283 (SKLD), and 307–309 (SIY). Residues Ser174 and Thr194 each contribute to the Mg(2+) site.

This sequence belongs to the TRAFAC class OBG-HflX-like GTPase superfamily. OBG GTPase family. As to quaternary structure, monomer. The cofactor is Mg(2+).

It is found in the cytoplasm. Functionally, an essential GTPase which binds GTP, GDP and possibly (p)ppGpp with moderate affinity, with high nucleotide exchange rates and a fairly low GTP hydrolysis rate. Plays a role in control of the cell cycle, stress response, ribosome biogenesis and in those bacteria that undergo differentiation, in morphogenesis control. The protein is GTPase Obg of Borrelia recurrentis (strain A1).